A 387-amino-acid chain; its full sequence is O-methyltransferase fsr2 (387 aa).

Residue aspartate 231 coordinates S-adenosyl-L-methionine. Residue histidine 280 is the Proton acceptor of the active site.

This sequence belongs to the class I-like SAM-binding methyltransferase superfamily. Cation-independent O-methyltransferase family. COMT subfamily.

The protein operates within polyketide biosynthesis. Its function is as follows. O-methyltransferase; part of the gene cluster that mediates the biosynthesis of fusarubins, highly pigmented naphthoquinones responsible for the coloration of the fruiting bodies. The non-reducing polyketide synthase FSR1 is responsible for the condensation of seven acetyl-CoA units to yield a haptaketide. After rings A and B are formed by aldol-type cyclization, the PKS-derived product is released as 6-O-demethylfusarubinaldehyde. Then, two hydroxyl groups at C-5 and C-10 are incorporated by FSR3, and simultaneously hydroxyl groups at C-6 and C-8 are methylated by FSR2. The aldehyde is, on the one hand, reduced by FSR3 to 8-O-methylfusarubin alcohol, which equilibrates mainly with 8-O-methylfusarubin and only small amounts of 8-O-methylnectriafurone. On the other hand, the aldehyde can be oxidized to form 8-O-methylfusarubinic acid, a reaction driven by FSR3 equilibrating with 8-O-methylfusarubinlactone, finally resulting in 8-O-methylanhydrofusarubinlactol after a further reduction step and loss of water. 8-O-Methylfusarubinic acid can also undergo decarboxylation, resulting in 8-O-methyl-13-hydroxynorjavanicin after another hydroxylation step at C-13. Both steps are most likely also accomplished by FSR3. No enzymatic function has been determined so far for either FSR4 and FSR5. Their deletion does not alter the product spectrum, but the possibility that they catalyze specific enzymatic steps during perithecium development cannot be ruled out. FSR4 might possess a regulatory function in the biosynthesis of fusarubins. The protein is O-methyltransferase fsr2 of Gibberella fujikuroi (strain CBS 195.34 / IMI 58289 / NRRL A-6831) (Bakanae and foot rot disease fungus).